The sequence spans 434 residues: Angio-associated migratory cell protein (434 aa).

Positions 1 to 63 are disordered; the sequence is MESESESGAA…EEEEEEGNEE (63 aa). Phosphoserine is present on serine 20. Residues 39–62 show a composition bias toward acidic residues; the sequence is DPDDLAQEMEDVDFEEEEEEEGNE. WD repeat units lie at residues 89–129, 132–171, 173–212, 214–254, 258–299, 315–354, 356–395, and 398–433; these read LHSA…LLFE, GHKD…EVWS, EAGD…KTFQ, PNCP…HVLK, GHQG…GVFR, SESN…LRHQ, QHQS…LLTD, and GHTA…QRPD.

The protein localises to the cell membrane. It is found in the cytoplasm. Functionally, plays a role in angiogenesis and cell migration. In smooth muscle cell migration, may act through the RhoA pathway. In Pongo abelii (Sumatran orangutan), this protein is Angio-associated migratory cell protein (AAMP).